Reading from the N-terminus, the 1021-residue chain is Contactin-1 (1021 aa).

The first 20 residues, 1–20 (MKTPLLVSHLLLISLTSCLG), serve as a signal peptide directing secretion. Ig-like C2-type domains follow at residues 41-131 (PIFE…ATLS), 137-223 (PFPP…KSVF), 241-326 (PADI…ARIY), 331-407 (PEWV…AELK), 413-500 (PTFE…GTLV), and 504-603 (PTRI…LVVR). 2 cysteine pairs are disulfide-bonded: cysteine 65–cysteine 114 and cysteine 158–cysteine 211. 2 N-linked (GlcNAc...) asparagine glycosylation sites follow: asparagine 208 and asparagine 258. Cysteine 263 and cysteine 310 are joined by a disulfide. Asparagine 338 carries an N-linked (GlcNAc...) asparagine glycan. 2 disulfide bridges follow: cysteine 352-cysteine 391 and cysteine 436-cysteine 484. N-linked (GlcNAc...) asparagine glycans are attached at residues asparagine 457, asparagine 473, asparagine 494, and asparagine 521. Cysteine 526 and cysteine 585 are disulfide-bonded. An N-linked (GlcNAc...) asparagine glycan is attached at asparagine 593. Fibronectin type-III domains lie at 608–706 (PPGG…TDGA), 711–808 (APSD…SAQD), 813–908 (APTE…APPS), and 909–1002 (QPPR…TLSS). Residues 695-719 (SIPSNRIKTDGAAPNVAPSDVGGGG) form a disordered region. Asparagine 935 carries an N-linked (GlcNAc...) asparagine glycan. Serine 1001 is lipidated: GPI-anchor amidated serine. The propeptide at 1002-1021 (SGLLSLLLPSLGFLVFYSEF) is removed in mature form.

The protein belongs to the immunoglobulin superfamily. Contactin family. As to quaternary structure, monomer. Interacts with NOTCH1. Interacts with CNTNAP1 in cis form and TNR. Binds to the carbonic-anhydrase like domain of PTPRZ1. Detected in a complex with NRCAM and PTPRB. Interacts with TASOR. In terms of tissue distribution, expressed by neurons, oligodendrocytes and their progenitors (at protein level). Myelination regulates the expression being down-regulated when neurons are in contact with Schwann cells.

It is found in the cell membrane. Functionally, contactins mediate cell surface interactions during nervous system development. Involved in the formation of paranodal axo-glial junctions in myelinated peripheral nerves and in the signaling between axons and myelinating glial cells via its association with CNTNAP1. Participates in oligodendrocytes generation by acting as a ligand of NOTCH1. Its association with NOTCH1 promotes NOTCH1 activation through the released notch intracellular domain (NICD) and subsequent translocation to the nucleus. Interaction with TNR induces a repulsion of neurons and an inhibition of neurite outgrowth. This is Contactin-1 (Cntn1) from Rattus norvegicus (Rat).